Consider the following 178-residue polypeptide: Large ribosomal subunit protein uL5 (178 aa).

Belongs to the universal ribosomal protein uL5 family. Part of the 50S ribosomal subunit; part of the 5S rRNA/L5/L18/L25 subcomplex. Contacts the 5S rRNA and the P site tRNA. Forms a bridge to the 30S subunit in the 70S ribosome.

Functionally, this is one of the proteins that bind and probably mediate the attachment of the 5S RNA into the large ribosomal subunit, where it forms part of the central protuberance. In the 70S ribosome it contacts protein S13 of the 30S subunit (bridge B1b), connecting the 2 subunits; this bridge is implicated in subunit movement. Contacts the P site tRNA; the 5S rRNA and some of its associated proteins might help stabilize positioning of ribosome-bound tRNAs. This Wolbachia pipientis subsp. Culex pipiens (strain wPip) protein is Large ribosomal subunit protein uL5.